Consider the following 173-residue polypeptide: Ribosome maturation factor RimM (173 aa).

The 80-residue stretch at 94-173 folds into the PRC barrel domain; sequence EGEFYWRDLI…TIEVDWDPGF (80 aa).

Belongs to the RimM family. In terms of assembly, binds ribosomal protein uS19.

Its subcellular location is the cytoplasm. An accessory protein needed during the final step in the assembly of 30S ribosomal subunit, possibly for assembly of the head region. Essential for efficient processing of 16S rRNA. May be needed both before and after RbfA during the maturation of 16S rRNA. It has affinity for free ribosomal 30S subunits but not for 70S ribosomes. The polypeptide is Ribosome maturation factor RimM (Aeromonas salmonicida (strain A449)).